The following is a 236-amino-acid chain: Small ribosomal subunit protein uS2c (236 aa).

The protein belongs to the universal ribosomal protein uS2 family.

The protein localises to the plastid. Its subcellular location is the chloroplast. The sequence is that of Small ribosomal subunit protein uS2c (rps2) from Liriodendron tulipifera (Tuliptree).